Consider the following 678-residue polypeptide: Glycine--tRNA ligase beta subunit (678 aa).

The protein belongs to the class-II aminoacyl-tRNA synthetase family. As to quaternary structure, tetramer of two alpha and two beta subunits.

It is found in the cytoplasm. The enzyme catalyses tRNA(Gly) + glycine + ATP = glycyl-tRNA(Gly) + AMP + diphosphate. This is Glycine--tRNA ligase beta subunit from Streptococcus pneumoniae serotype 19F (strain G54).